Here is a 520-residue protein sequence, read N- to C-terminus: Peptide chain release factor 3 (520 aa).

Residues 8 to 277 form the tr-type G domain; that stretch reads ESRKTFAIIS…FAPMPNARQT (270 aa). GTP contacts are provided by residues 17–24, 85–89, and 139–142; these read SHPDAGKT, DTPGH, and NKLD.

This sequence belongs to the TRAFAC class translation factor GTPase superfamily. Classic translation factor GTPase family. PrfC subfamily.

It localises to the cytoplasm. In terms of biological role, increases the formation of ribosomal termination complexes and stimulates activities of RF-1 and RF-2. It binds guanine nucleotides and has strong preference for UGA stop codons. It may interact directly with the ribosome. The stimulation of RF-1 and RF-2 is significantly reduced by GTP and GDP, but not by GMP. The sequence is that of Peptide chain release factor 3 from Staphylococcus aureus (strain USA300 / TCH1516).